Reading from the N-terminus, the 345-residue chain is S-adenosylmethionine:tRNA ribosyltransferase-isomerase (345 aa).

It belongs to the QueA family. As to quaternary structure, monomer.

The protein resides in the cytoplasm. The catalysed reaction is 7-aminomethyl-7-carbaguanosine(34) in tRNA + S-adenosyl-L-methionine = epoxyqueuosine(34) in tRNA + adenine + L-methionine + 2 H(+). The protein operates within tRNA modification; tRNA-queuosine biosynthesis. Transfers and isomerizes the ribose moiety from AdoMet to the 7-aminomethyl group of 7-deazaguanine (preQ1-tRNA) to give epoxyqueuosine (oQ-tRNA). This is S-adenosylmethionine:tRNA ribosyltransferase-isomerase from Anaeromyxobacter dehalogenans (strain 2CP-C).